The chain runs to 333 residues: Ketol-acid reductoisomerase (NADP(+)) (333 aa).

Residues 1 to 171 (MSNDTQPKIA…GGARANIIKT (171 aa)) enclose the KARI N-terminal Rossmann domain. NADP(+) contacts are provided by residues 14–17 (YGSQ), Arg37, Thr42, and 72–75 (DMVQ). His97 is an active-site residue. Residue Gly123 participates in NADP(+) binding. The KARI C-terminal knotted domain maps to 172-317 (TFKEETETDL…KKLRAKMVWL (146 aa)). Mg(2+) contacts are provided by Asp180, Glu184, Glu216, and Glu220. Ser241 contributes to the substrate binding site.

This sequence belongs to the ketol-acid reductoisomerase family. Mg(2+) serves as cofactor.

The enzyme catalyses (2R)-2,3-dihydroxy-3-methylbutanoate + NADP(+) = (2S)-2-acetolactate + NADPH + H(+). It catalyses the reaction (2R,3R)-2,3-dihydroxy-3-methylpentanoate + NADP(+) = (S)-2-ethyl-2-hydroxy-3-oxobutanoate + NADPH + H(+). It participates in amino-acid biosynthesis; L-isoleucine biosynthesis; L-isoleucine from 2-oxobutanoate: step 2/4. Its pathway is amino-acid biosynthesis; L-valine biosynthesis; L-valine from pyruvate: step 2/4. Its function is as follows. Involved in the biosynthesis of branched-chain amino acids (BCAA). Catalyzes an alkyl-migration followed by a ketol-acid reduction of (S)-2-acetolactate (S2AL) to yield (R)-2,3-dihydroxy-isovalerate. In the isomerase reaction, S2AL is rearranged via a Mg-dependent methyl migration to produce 3-hydroxy-3-methyl-2-ketobutyrate (HMKB). In the reductase reaction, this 2-ketoacid undergoes a metal-dependent reduction by NADPH to yield (R)-2,3-dihydroxy-isovalerate. This chain is Ketol-acid reductoisomerase (NADP(+)), found in Xanthomonas oryzae pv. oryzae (strain MAFF 311018).